The following is a 218-amino-acid chain: Glutathione S-transferase U22 (218 aa).

N-acetylalanine is present on alanine 2. The GST N-terminal domain occupies 3–82 (DEVILLDFWP…YIDEVWSDKN (80 aa)). Glutathione-binding positions include 13 to 14 (SP), 39 to 40 (DK), 53 to 54 (KI), and 66 to 67 (ES). The GST C-terminal domain occupies 88 to 208 (DPYQRAQARF…LHDSEKILAF (121 aa)). Phosphothreonine is present on threonine 149.

This sequence belongs to the GST superfamily. Tau family.

The protein localises to the cytoplasm. Its subcellular location is the cytosol. The catalysed reaction is RX + glutathione = an S-substituted glutathione + a halide anion + H(+). May be involved in the conjugation of reduced glutathione to a wide number of exogenous and endogenous hydrophobic electrophiles and have a detoxification role against certain herbicides. The chain is Glutathione S-transferase U22 (GSTU22) from Arabidopsis thaliana (Mouse-ear cress).